A 143-amino-acid polypeptide reads, in one-letter code: Translation initiation factor 2 subunit beta (143 aa).

It belongs to the eIF-2-beta/eIF-5 family. As to quaternary structure, heterotrimer composed of an alpha, a beta and a gamma chain.

EIF-2 functions in the early steps of protein synthesis by forming a ternary complex with GTP and initiator tRNA. The sequence is that of Translation initiation factor 2 subunit beta (eif2b) from Methanocaldococcus jannaschii (strain ATCC 43067 / DSM 2661 / JAL-1 / JCM 10045 / NBRC 100440) (Methanococcus jannaschii).